Consider the following 256-residue polypeptide: Tryptophan synthase alpha chain (256 aa).

Catalysis depends on proton acceptor residues Glu44 and Asp55.

Belongs to the TrpA family. Tetramer of two alpha and two beta chains.

The catalysed reaction is (1S,2R)-1-C-(indol-3-yl)glycerol 3-phosphate + L-serine = D-glyceraldehyde 3-phosphate + L-tryptophan + H2O. It functions in the pathway amino-acid biosynthesis; L-tryptophan biosynthesis; L-tryptophan from chorismate: step 5/5. Its function is as follows. The alpha subunit is responsible for the aldol cleavage of indoleglycerol phosphate to indole and glyceraldehyde 3-phosphate. The sequence is that of Tryptophan synthase alpha chain from Coxiella burnetii (strain CbuK_Q154) (Coxiella burnetii (strain Q154)).